Consider the following 356-residue polypeptide: Protein pelota homolog (356 aa).

It belongs to the eukaryotic release factor 1 family. Pelota subfamily. In terms of assembly, monomer. It depends on a divalent metal cation as a cofactor.

The protein localises to the cytoplasm. Its function is as follows. May function in recognizing stalled ribosomes, interact with stem-loop structures in stalled mRNA molecules, and effect endonucleolytic cleavage of the mRNA. May play a role in the release non-functional ribosomes and degradation of damaged mRNAs. Has endoribonuclease activity. This chain is Protein pelota homolog, found in Staphylothermus marinus (strain ATCC 43588 / DSM 3639 / JCM 9404 / F1).